Here is a 141-residue protein sequence, read N- to C-terminus: Ribosome-binding factor A (141 aa).

The interval 120–141 (SPHVQRDLQENDDQEDDSEGSL) is disordered. A compositionally biased stretch (acidic residues) spans 129–141 (ENDDQEDDSEGSL).

Belongs to the RbfA family. In terms of assembly, monomer. Binds 30S ribosomal subunits, but not 50S ribosomal subunits or 70S ribosomes.

The protein resides in the cytoplasm. One of several proteins that assist in the late maturation steps of the functional core of the 30S ribosomal subunit. Associates with free 30S ribosomal subunits (but not with 30S subunits that are part of 70S ribosomes or polysomes). Required for efficient processing of 16S rRNA. May interact with the 5'-terminal helix region of 16S rRNA. The sequence is that of Ribosome-binding factor A from Zymomonas mobilis subsp. mobilis (strain ATCC 31821 / ZM4 / CP4).